Consider the following 193-residue polypeptide: Ion-translocating oxidoreductase complex subunit A (193 aa).

6 helical membrane-spanning segments follow: residues 5–25, 39–59, 62–82, 102–122, 134–154, and 171–191; these read LLLFVGTVLVNNFVLVKFLGL, IGMGFATTFVMTIASISSWLM, FILVPLDLLYLRTLSFILVIA, LLGIFLPLITTNCAVLGVALL, AVYGFGAAVGFSLVMVLFAAI, and SIGLITAGLMSLAFMGFSGLV.

This sequence belongs to the NqrDE/RnfAE family. In terms of assembly, the complex is composed of six subunits: RnfA, RnfB, RnfC, RnfD, RnfE and RnfG.

The protein localises to the cell inner membrane. Functionally, part of a membrane-bound complex that couples electron transfer with translocation of ions across the membrane. The chain is Ion-translocating oxidoreductase complex subunit A from Proteus mirabilis (strain HI4320).